A 388-amino-acid polypeptide reads, in one-letter code: Alanine racemase (388 aa).

Residue lysine 44 is the Proton acceptor; specific for D-alanine of the active site. An N6-(pyridoxal phosphate)lysine modification is found at lysine 44. Arginine 142 contributes to the substrate binding site. Tyrosine 273 acts as the Proton acceptor; specific for L-alanine in catalysis. Methionine 321 contacts substrate.

This sequence belongs to the alanine racemase family. Requires pyridoxal 5'-phosphate as cofactor.

It catalyses the reaction L-alanine = D-alanine. It participates in amino-acid biosynthesis; D-alanine biosynthesis; D-alanine from L-alanine: step 1/1. Functionally, catalyzes the interconversion of L-alanine and D-alanine. May also act on other amino acids. In Mycobacterium leprae (strain TN), this protein is Alanine racemase (alr).